A 301-amino-acid chain; its full sequence is Peptidyl-prolyl cis-trans isomerase E (301 aa).

One can recognise an RRM domain in the interval 5-83 (KRVLYVGGLA…GRTIRVNLAK (79 aa)). 3 positions are modified to phosphoserine: Ser91, Ser97, and Ser119. Residues 107–140 (GKTLEENKEEEGSEPPKAETQEGEPAAKKARSNP) form a disordered region. One can recognise a PPIase cyclophilin-type domain in the interval 143–299 (YMDIKIGNKP…QKVIIADCGE (157 aa)).

This sequence belongs to the cyclophilin-type PPIase family. PPIase E subfamily. In terms of assembly, identified in the spliceosome C complex. Component of the XAB2 complex, a multimeric protein complex composed of XAB2, PRPF19, AQR, ZNF830, ISY1, and PPIE. Identified in a pentameric intron-binding (IB) complex composed of AQR, XAB2, ISY1, ZNF830 and PPIE that is incorporated into the spliceosome as a preassembled complex. The IB complex does not contain PRPF19. Interacts (via RNA-binding domain) with KMT2A (via the third PHD-type zinc-finger).

The protein resides in the nucleus. The catalysed reaction is [protein]-peptidylproline (omega=180) = [protein]-peptidylproline (omega=0). Its function is as follows. Involved in pre-mRNA splicing as component of the spliceosome. Combines RNA-binding and PPIase activities. Binds mRNA and has a preference for single-stranded RNA molecules with poly-A and poly-U stretches, suggesting it binds to the poly(A)-region in the 3'-UTR of mRNA molecules. Catalyzes the cis-trans isomerization of proline imidic peptide bonds in proteins. Inhibits KMT2A activity; this requires proline isomerase activity. The protein is Peptidyl-prolyl cis-trans isomerase E (PPIE) of Pongo abelii (Sumatran orangutan).